Here is a 302-residue protein sequence, read N- to C-terminus: Recombination-associated protein RdgC (302 aa).

It belongs to the RdgC family.

The protein localises to the cytoplasm. The protein resides in the nucleoid. May be involved in recombination. This is Recombination-associated protein RdgC from Xylella fastidiosa (strain M23).